The primary structure comprises 302 residues: Homoserine O-acetyltransferase (302 aa).

The active-site Acyl-thioester intermediate is the C142. Positions 163 and 192 each coordinate substrate. The active-site Proton acceptor is the H235. Residue E237 is part of the active site. R249 lines the substrate pocket.

It belongs to the MetA family.

It localises to the cytoplasm. The catalysed reaction is L-homoserine + acetyl-CoA = O-acetyl-L-homoserine + CoA. It functions in the pathway amino-acid biosynthesis; L-methionine biosynthesis via de novo pathway; O-acetyl-L-homoserine from L-homoserine: step 1/1. Functionally, transfers an acetyl group from acetyl-CoA to L-homoserine, forming acetyl-L-homoserine. The chain is Homoserine O-acetyltransferase from Geobacillus kaustophilus (strain HTA426).